The chain runs to 336 residues: tRNA N6-adenosine threonylcarbamoyltransferase (336 aa).

Fe cation contacts are provided by His-114 and His-118. Residues 136–140 (LVSGG), Asp-169, Gly-182, Asp-186, and Asn-275 each bind substrate. A Fe cation-binding site is contributed by Asp-301.

Belongs to the KAE1 / TsaD family. Fe(2+) is required as a cofactor.

The protein resides in the cytoplasm. It carries out the reaction L-threonylcarbamoyladenylate + adenosine(37) in tRNA = N(6)-L-threonylcarbamoyladenosine(37) in tRNA + AMP + H(+). Functionally, required for the formation of a threonylcarbamoyl group on adenosine at position 37 (t(6)A37) in tRNAs that read codons beginning with adenine. Is involved in the transfer of the threonylcarbamoyl moiety of threonylcarbamoyl-AMP (TC-AMP) to the N6 group of A37, together with TsaE and TsaB. TsaD likely plays a direct catalytic role in this reaction. In Streptococcus pneumoniae (strain Taiwan19F-14), this protein is tRNA N6-adenosine threonylcarbamoyltransferase.